The following is a 530-amino-acid chain: Glutamate--cysteine ligase (530 aa).

This sequence belongs to the glutamate--cysteine ligase type 1 family. Type 1 subfamily.

The enzyme catalyses L-cysteine + L-glutamate + ATP = gamma-L-glutamyl-L-cysteine + ADP + phosphate + H(+). It functions in the pathway sulfur metabolism; glutathione biosynthesis; glutathione from L-cysteine and L-glutamate: step 1/2. In Pseudomonas entomophila (strain L48), this protein is Glutamate--cysteine ligase.